The sequence spans 311 residues: Ribosomal RNA small subunit methyltransferase H (311 aa).

Residues G39–H41, D59, F87, D102, and H109 each bind S-adenosyl-L-methionine.

It belongs to the methyltransferase superfamily. RsmH family.

The protein resides in the cytoplasm. It catalyses the reaction cytidine(1402) in 16S rRNA + S-adenosyl-L-methionine = N(4)-methylcytidine(1402) in 16S rRNA + S-adenosyl-L-homocysteine + H(+). In terms of biological role, specifically methylates the N4 position of cytidine in position 1402 (C1402) of 16S rRNA. This chain is Ribosomal RNA small subunit methyltransferase H, found in Porphyromonas gingivalis (strain ATCC 33277 / DSM 20709 / CIP 103683 / JCM 12257 / NCTC 11834 / 2561).